We begin with the raw amino-acid sequence, 475 residues long: MSPQTETKASVGFKAGVKDYKLTYYTPDYETKDTDILAAFRVTPQPGVPPEEAGAAVAAESSTGTWTTVWTDGLTSLDRYKGRCYHIEPVAGDENQYICYVAYPLDLFEEGSVTNMFTSIVGNVFGFKALRALRLEDLRIPPSYTKTFQGPPHGIQVERDKLNKYGRPLLGCTIKPKLGLSAKNYGRAVYECLRGGLDFTKDDENVNSQPFMRWRDRFLFCAEAIFKSQAETGEIKGHYLNATAGTCEEMMKRAVFARELGVPIVMHDYLTGGFTANTSLAHYCRDNGLLLHIHRAMHAVIDRQKNHGIHFRVLAKALRMSGGDHIHAGTVVGKLEGERDITLGFVDLLRDDFIEKDRSRGIYFTQDWVSLPGVLPVASGGIHVWHMPALTEIFGDDSVLQFGGGTLGHPWGNAPGAVANRVALEACVQARNEGRDLAREGNEIIREASKWSPELAAACEVWKEIKFEFEAMDTL.

Residues 1 to 2 (MS) constitute a propeptide that is removed on maturation. An N-acetylproline modification is found at P3. An N6,N6,N6-trimethyllysine modification is found at K14. The substrate site is built by N123 and T173. Catalysis depends on K175, which acts as the Proton acceptor. K177 lines the substrate pocket. Positions 201, 203, and 204 each coordinate Mg(2+). Residue K201 is modified to N6-carboxylysine. H294 (proton acceptor) is an active-site residue. R295, H327, and S379 together coordinate substrate.

The protein belongs to the RuBisCO large chain family. Type I subfamily. In terms of assembly, heterohexadecamer of 8 large chains and 8 small chains; disulfide-linked. The disulfide link is formed within the large subunit homodimers. It depends on Mg(2+) as a cofactor. In terms of processing, the disulfide bond which can form in the large chain dimeric partners within the hexadecamer appears to be associated with oxidative stress and protein turnover.

Its subcellular location is the plastid. It is found in the chloroplast. The catalysed reaction is 2 (2R)-3-phosphoglycerate + 2 H(+) = D-ribulose 1,5-bisphosphate + CO2 + H2O. It carries out the reaction D-ribulose 1,5-bisphosphate + O2 = 2-phosphoglycolate + (2R)-3-phosphoglycerate + 2 H(+). In terms of biological role, ruBisCO catalyzes two reactions: the carboxylation of D-ribulose 1,5-bisphosphate, the primary event in carbon dioxide fixation, as well as the oxidative fragmentation of the pentose substrate in the photorespiration process. Both reactions occur simultaneously and in competition at the same active site. The protein is Ribulose bisphosphate carboxylase large chain of Eucalyptus globulus subsp. globulus (Tasmanian blue gum).